The primary structure comprises 96 residues: Co-chaperonin GroES (96 aa).

The protein belongs to the GroES chaperonin family. In terms of assembly, heptamer of 7 subunits arranged in a ring. Interacts with the chaperonin GroEL.

It is found in the cytoplasm. Its function is as follows. Together with the chaperonin GroEL, plays an essential role in assisting protein folding. The GroEL-GroES system forms a nano-cage that allows encapsulation of the non-native substrate proteins and provides a physical environment optimized to promote and accelerate protein folding. GroES binds to the apical surface of the GroEL ring, thereby capping the opening of the GroEL channel. The chain is Co-chaperonin GroES from Legionella pneumophila (strain Paris).